Here is a 170-residue protein sequence, read N- to C-terminus: IMPACT family member YDL177C (170 aa).

The interval 79 to 98 (KKKGNKANKSNNSHVNKSRN) is disordered.

This sequence belongs to the IMPACT family.

In Saccharomyces cerevisiae (strain ATCC 204508 / S288c) (Baker's yeast), this protein is IMPACT family member YDL177C.